Here is a 134-residue protein sequence, read N- to C-terminus: uncharacterized protein (134 aa).

3 consecutive transmembrane segments (helical) span residues 26-46, 55-75, and 101-121; these read VAVFLVRAVILLIFAAFGNIG, LLKFSIINIIMLLFGIAQIIV, and YAPMILLLAVNLCGAVFGLIL.

The protein resides in the membrane. This is an uncharacterized protein from Dictyostelium discoideum (Social amoeba).